A 405-amino-acid polypeptide reads, in one-letter code: Nicotinate phosphoribosyltransferase (405 aa).

His224 bears the Phosphohistidine; by autocatalysis mark.

Belongs to the NAPRTase family. In terms of processing, transiently phosphorylated on a His residue during the reaction cycle. Phosphorylation strongly increases the affinity for substrates and increases the rate of nicotinate D-ribonucleotide production. Dephosphorylation regenerates the low-affinity form of the enzyme, leading to product release.

It carries out the reaction nicotinate + 5-phospho-alpha-D-ribose 1-diphosphate + ATP + H2O = nicotinate beta-D-ribonucleotide + ADP + phosphate + diphosphate. It participates in cofactor biosynthesis; NAD(+) biosynthesis; nicotinate D-ribonucleotide from nicotinate: step 1/1. Functionally, catalyzes the synthesis of beta-nicotinate D-ribonucleotide from nicotinate and 5-phospho-D-ribose 1-phosphate at the expense of ATP. In Methanococcoides burtonii (strain DSM 6242 / NBRC 107633 / OCM 468 / ACE-M), this protein is Nicotinate phosphoribosyltransferase.